The sequence spans 248 residues: Octanoyltransferase (248 aa).

A BPL/LPL catalytic domain is found at 53–238 (ADTGDEIWVV…NLDGASAAAD (186 aa)). Residues 93–100 (RGGQITYH), 165–167 (ALG), and 178–180 (GLS) each bind substrate. The active-site Acyl-thioester intermediate is Cys196.

Belongs to the LipB family.

It is found in the cytoplasm. It carries out the reaction octanoyl-[ACP] + L-lysyl-[protein] = N(6)-octanoyl-L-lysyl-[protein] + holo-[ACP] + H(+). Its pathway is protein modification; protein lipoylation via endogenous pathway; protein N(6)-(lipoyl)lysine from octanoyl-[acyl-carrier-protein]: step 1/2. Functionally, catalyzes the transfer of endogenously produced octanoic acid from octanoyl-acyl-carrier-protein onto the lipoyl domains of lipoate-dependent enzymes. Lipoyl-ACP can also act as a substrate although octanoyl-ACP is likely to be the physiological substrate. The protein is Octanoyltransferase of Burkholderia orbicola (strain MC0-3).